We begin with the raw amino-acid sequence, 173 residues long: Ribosome maturation factor RimM (173 aa).

Residues 95-169 enclose the PRC barrel domain; that stretch reads PDEFYDHELE…TIVIDPPEGL (75 aa).

Belongs to the RimM family. In terms of assembly, binds ribosomal protein uS19.

It localises to the cytoplasm. Its function is as follows. An accessory protein needed during the final step in the assembly of 30S ribosomal subunit, possibly for assembly of the head region. Essential for efficient processing of 16S rRNA. May be needed both before and after RbfA during the maturation of 16S rRNA. It has affinity for free ribosomal 30S subunits but not for 70S ribosomes. In Mycolicibacterium smegmatis (strain ATCC 700084 / mc(2)155) (Mycobacterium smegmatis), this protein is Ribosome maturation factor RimM.